The following is a 331-amino-acid chain: Junctional sarcoplasmic reticulum protein 1 (331 aa).

Disordered stretches follow at residues 1-118 and 157-331; these read MSMT…EELP and RVPE…KGRD. A mediates interaction with CACNA1S region spans residues 3–76; the sequence is MTTRAWEELD…EKEPAARGTP (74 aa). Basic and acidic residues-rich tracts occupy residues 21–35 and 61–71; these read LEDH…EDRA and TRPKKMEKEPA. 2 stretches are compositionally biased toward pro residues: residues 103 to 112 and 161 to 175; these read PLQPPPPPPA and PWVP…PSSP. Composition is skewed to basic and acidic residues over residues 222 to 242 and 250 to 302; these read AVRE…PRRE and PRKE…EPRK. A compositionally biased stretch (basic residues) spans 320 to 331; sequence SRQKLRAGKGRD.

In terms of assembly, interacts with CACNA1S, CACNB1 and calsequestrin.

The protein resides in the sarcoplasmic reticulum membrane. It localises to the endoplasmic reticulum membrane. Functionally, involved in skeletal muscle excitation/contraction coupling (EC), probably acting as a regulator of the voltage-sensitive calcium channel CACNA1S. EC is a physiological process whereby an electrical signal (depolarization of the plasma membrane) is converted into a chemical signal, a calcium gradient, by the opening of ryanodine receptor calcium release channels. May regulate CACNA1S membrane targeting and activity. The protein is Junctional sarcoplasmic reticulum protein 1 (JSRP1) of Homo sapiens (Human).